The primary structure comprises 203 residues: dITP/XTP pyrophosphatase (203 aa).

7-12 is a binding site for substrate; the sequence is TGNRDK. The Proton acceptor role is filled by Asp-73. Asp-73 serves as a coordination point for Mg(2+). Residues Ser-74, 155–158, Lys-178, and 183–184 each bind substrate; these read FGYD and HR.

The protein belongs to the HAM1 NTPase family. Homodimer. Requires Mg(2+) as cofactor.

It catalyses the reaction XTP + H2O = XMP + diphosphate + H(+). The catalysed reaction is dITP + H2O = dIMP + diphosphate + H(+). It carries out the reaction ITP + H2O = IMP + diphosphate + H(+). Its function is as follows. Pyrophosphatase that catalyzes the hydrolysis of nucleoside triphosphates to their monophosphate derivatives, with a high preference for the non-canonical purine nucleotides XTP (xanthosine triphosphate), dITP (deoxyinosine triphosphate) and ITP. Seems to function as a house-cleaning enzyme that removes non-canonical purine nucleotides from the nucleotide pool, thus preventing their incorporation into DNA/RNA and avoiding chromosomal lesions. This Wolinella succinogenes (strain ATCC 29543 / DSM 1740 / CCUG 13145 / JCM 31913 / LMG 7466 / NCTC 11488 / FDC 602W) (Vibrio succinogenes) protein is dITP/XTP pyrophosphatase.